Here is a 226-residue protein sequence, read N- to C-terminus: MLTQQELKQQAADAALELVEQVAGPDVIIGVGTGSTADLFIDGLACFKGRLRGTVASSERSAARLAGHGLAVLDLNDVQSMPIYVDGADEIDPNLHMIKGGGGALTREKIVASVARRYICIADESKLVERLGRFPLPVEVIPMARNAVARGLSRLGGQPALREGFVTDNGNIILDVAGLSIADAPGLEKTINDIPGVVTCGLFALAGADVALLATQDGIRRLERRG.

Substrate is bound by residues 33–36 (TGST), 86–89 (DGAD), and 99–102 (KGGG). The active-site Proton acceptor is the glutamate 108. Position 126 (lysine 126) interacts with substrate.

The protein belongs to the ribose 5-phosphate isomerase family. In terms of assembly, homodimer.

It carries out the reaction aldehydo-D-ribose 5-phosphate = D-ribulose 5-phosphate. It functions in the pathway carbohydrate degradation; pentose phosphate pathway; D-ribose 5-phosphate from D-ribulose 5-phosphate (non-oxidative stage): step 1/1. In terms of biological role, catalyzes the reversible conversion of ribose-5-phosphate to ribulose 5-phosphate. This is Ribose-5-phosphate isomerase A from Bordetella pertussis (strain Tohama I / ATCC BAA-589 / NCTC 13251).